Here is a 140-residue protein sequence, read N- to C-terminus: MIDIKEIREALPHRYPMLLVDRVLEVSEDEIVAIKNVSINEPFFNGHFPEYPVMPGVLIMEALAQTAGVLELSKEENKGKLVFYAGMDKVKFKKQVVPGDQLVMTAKFVKRRGTIAVVEAIAEVDGKLAASGTLTFAIGN.

The active site involves His47.

It belongs to the thioester dehydratase family. FabZ subfamily.

It localises to the cytoplasm. The catalysed reaction is a (3R)-hydroxyacyl-[ACP] = a (2E)-enoyl-[ACP] + H2O. Its function is as follows. Involved in unsaturated fatty acids biosynthesis. Catalyzes the dehydration of short chain beta-hydroxyacyl-ACPs and long chain saturated and unsaturated beta-hydroxyacyl-ACPs. This Streptococcus agalactiae serotype III (strain NEM316) protein is 3-hydroxyacyl-[acyl-carrier-protein] dehydratase FabZ.